A 335-amino-acid polypeptide reads, in one-letter code: Holliday junction branch migration complex subunit RuvB (335 aa).

Residues 4 to 184 (ADRIISSNAQ…FGIVQRLEFY (181 aa)) form a large ATPase domain (RuvB-L) region. ATP contacts are provided by residues I23, R24, G65, K68, T69, T70, 131 to 133 (EDY), R174, Y184, and R221. T69 contacts Mg(2+). The tract at residues 185-255 (SVEDLTSIVA…IAKSALSMLD (71 aa)) is small ATPAse domain (RuvB-S). The tract at residues 258-335 (QAGFDYLDRK…RHFGLDKLTE (78 aa)) is head domain (RuvB-H). DNA contacts are provided by R294, R313, and R318.

Belongs to the RuvB family. In terms of assembly, homohexamer. Forms an RuvA(8)-RuvB(12)-Holliday junction (HJ) complex. HJ DNA is sandwiched between 2 RuvA tetramers; dsDNA enters through RuvA and exits via RuvB. An RuvB hexamer assembles on each DNA strand where it exits the tetramer. Each RuvB hexamer is contacted by two RuvA subunits (via domain III) on 2 adjacent RuvB subunits; this complex drives branch migration. In the full resolvosome a probable DNA-RuvA(4)-RuvB(12)-RuvC(2) complex forms which resolves the HJ.

It is found in the cytoplasm. The catalysed reaction is ATP + H2O = ADP + phosphate + H(+). Functionally, the RuvA-RuvB-RuvC complex processes Holliday junction (HJ) DNA during genetic recombination and DNA repair, while the RuvA-RuvB complex plays an important role in the rescue of blocked DNA replication forks via replication fork reversal (RFR). RuvA specifically binds to HJ cruciform DNA, conferring on it an open structure. The RuvB hexamer acts as an ATP-dependent pump, pulling dsDNA into and through the RuvAB complex. RuvB forms 2 homohexamers on either side of HJ DNA bound by 1 or 2 RuvA tetramers; 4 subunits per hexamer contact DNA at a time. Coordinated motions by a converter formed by DNA-disengaged RuvB subunits stimulates ATP hydrolysis and nucleotide exchange. Immobilization of the converter enables RuvB to convert the ATP-contained energy into a lever motion, pulling 2 nucleotides of DNA out of the RuvA tetramer per ATP hydrolyzed, thus driving DNA branch migration. The RuvB motors rotate together with the DNA substrate, which together with the progressing nucleotide cycle form the mechanistic basis for DNA recombination by continuous HJ branch migration. Branch migration allows RuvC to scan DNA until it finds its consensus sequence, where it cleaves and resolves cruciform DNA. The protein is Holliday junction branch migration complex subunit RuvB of Mannheimia succiniciproducens (strain KCTC 0769BP / MBEL55E).